A 62-amino-acid polypeptide reads, in one-letter code: Mu-elapitoxin-Na1a (62 aa).

4 disulfides stabilise this stretch: Cys-3/Cys-22, Cys-15/Cys-40, Cys-44/Cys-55, and Cys-56/Cys-61.

This sequence belongs to the three-finger toxin family. Short-chain subfamily. Orphan group XV sub-subfamily. As to expression, expressed by the venom gland.

It localises to the secreted. In terms of biological role, potent inhibitor of human Nav1.8/SCN10A (IC(50)=141-380 nM). Is highly selective for this channel and acts in a reversible manner. Shows a depolarizing shift of activation and hyperpolarizing shift of inactivation. In contrast to the very similar cytotoxin A5 (AC P62375), does not seem to bind integrin alpha-V/beta-3, since it does not promote or inhibit the proliferation of HUVECs and C-PAE cells. In vivo, in rodent models of inflammatory and neuropathic pain, it alleviates nociceptive behaviors more potently than does morphine. It displays no evident cytotoxic, hemolytic and cardiotoxic activities and produces no obvious adverse responses in mice even at a dose 30-fold higher than that producing a significant analgesic effect. In Naja atra (Chinese cobra), this protein is Mu-elapitoxin-Na1a.